A 360-amino-acid polypeptide reads, in one-letter code: Phospho-N-acetylmuramoyl-pentapeptide-transferase (360 aa).

Helical transmembrane passes span 21–41 (YLSF…LWMG), 73–93 (TMGG…WADL), 94–114 (SNPY…VGFV), 132–152 (WKYF…YAHG), 168–188 (VMPQ…VGTS), 199–219 (GLAI…AWAT), 239–259 (LVVV…FNTY), 263–283 (VFMG…IAVL), 288–308 (LVLV…ILQV), and 338–358 (VIVR…ATLK).

It belongs to the glycosyltransferase 4 family. MraY subfamily. Mg(2+) is required as a cofactor.

It localises to the cell inner membrane. The catalysed reaction is UDP-N-acetyl-alpha-D-muramoyl-L-alanyl-gamma-D-glutamyl-meso-2,6-diaminopimeloyl-D-alanyl-D-alanine + di-trans,octa-cis-undecaprenyl phosphate = di-trans,octa-cis-undecaprenyl diphospho-N-acetyl-alpha-D-muramoyl-L-alanyl-D-glutamyl-meso-2,6-diaminopimeloyl-D-alanyl-D-alanine + UMP. The protein operates within cell wall biogenesis; peptidoglycan biosynthesis. Catalyzes the initial step of the lipid cycle reactions in the biosynthesis of the cell wall peptidoglycan: transfers peptidoglycan precursor phospho-MurNAc-pentapeptide from UDP-MurNAc-pentapeptide onto the lipid carrier undecaprenyl phosphate, yielding undecaprenyl-pyrophosphoryl-MurNAc-pentapeptide, known as lipid I. This chain is Phospho-N-acetylmuramoyl-pentapeptide-transferase, found in Vibrio atlanticus (strain LGP32) (Vibrio splendidus (strain Mel32)).